The chain runs to 342 residues: Phomopsin biosynthesis cluster protein B' (342 aa).

The interval 1–22 (MESIAKAKSLPNKGRTYDSQRP) is disordered. Residues 87–107 (VLIIGCAVISLFAIIGALGFA) traverse the membrane as a helical segment. Positions 118-186 (CASPAHQNPH…QCGESPDEAQ (69 aa)) are disordered. Residues 144 to 155 (HSGSHSSSSSTN) show a composition bias toward low complexity. Asparagine 248 carries an N-linked (GlcNAc...) asparagine glycan.

It localises to the membrane. Part of the gene cluster that mediates the biosynthesis of the phomopsins, a group of hexapeptide mycotoxins which infects lupins and causes lupinosis disease in livestock. The role of phomB' within the phomopsins biosynthesis pathway has still to be determined. The pathway starts with the processing of the precursor phomA by several endopeptidases including kexin proteases as well as the cluster-specific S41 family peptidase phomP1 and the oligopeptidase phomG to produce 10 identical copies of the hexapeptide Tyr-Val-Ile-Pro-Ile-Asp. After being excised from the precursor peptide, the core peptides are cyclized and modified post-translationally by enzymes encoded within the gene cluster. The timing and order of proteolysis of the phomA precursor and PTMs are still unknown. Two tyrosinase-like enzymes, phomQ1 and phomQ2, catalyze the chlorination and hydroxylation of Tyr, respectively. PhomYb, is proposed to be involved in the construction of the macrocyclic structure. The other 4 ustYa family proteins may be involved in PTMs that generate the unique structure of phomopsin A. PhomYa is required for the hydroxylation of C-beta of Tyr. PhomYc, phomYd, and phomYe are responsible for the biosynthesis of 2,3-dehydroisoleucine (dIle), 2,3-dehydroaspartic acid (dAsp), and 3,4-dehydroproline (dPro), respectively. While dIle formation by phomYc is indispensable for the installation of dAsp by phomYd, the order of the other PTMs have not been elucidated yet. Most of the biosynthetic enzymes likely have broad substrate specificity, and thus, there might be a metabolic grid from a precursor to phomopsin A. The enzyme(s) responsible for the biosynthesis of 3,4-dehydrovaline (dVal) have also not been identified yet. Finally, phomM acts as an S-adenosylmethionine-dependent alpha-N-methyltransferase that catalyzes two successive N-methylation reactions, converting N-desmethyl-phomopsin A to phomopsin A and phomopsin A further to an N,N-dimethylated congener called phomopsin E. This is Phomopsin biosynthesis cluster protein B' from Diaporthe leptostromiformis (Lupinosis disease fungus).